Here is a 284-residue protein sequence, read N- to C-terminus: Pantothenate synthetase (284 aa).

34-41 provides a ligand contact to ATP; it reads MGALHAGH. The active-site Proton donor is H41. (R)-pantoate is bound at residue Q65. A beta-alanine-binding site is contributed by Q65. 151 to 154 lines the ATP pocket; sequence GEKD. Q157 contacts (R)-pantoate. Residues L180 and 188–191 each bind ATP; that span reads MSSR.

This sequence belongs to the pantothenate synthetase family. Homodimer.

The protein localises to the cytoplasm. The catalysed reaction is (R)-pantoate + beta-alanine + ATP = (R)-pantothenate + AMP + diphosphate + H(+). The protein operates within cofactor biosynthesis; (R)-pantothenate biosynthesis; (R)-pantothenate from (R)-pantoate and beta-alanine: step 1/1. Functionally, catalyzes the condensation of pantoate with beta-alanine in an ATP-dependent reaction via a pantoyl-adenylate intermediate. The chain is Pantothenate synthetase from Paramagnetospirillum magneticum (strain ATCC 700264 / AMB-1) (Magnetospirillum magneticum).